A 1621-amino-acid chain; its full sequence is ALK tyrosine kinase receptor (1621 aa).

The first 18 residues, 1 to 18, serve as a signal peptide directing secretion; that stretch reads MGAAGFLWLLPPLLLAAA. At 19-1042 the chain is on the extracellular side; sequence SYSGAATDQR…PHLPLSLILS (1024 aa). Positions 48–70 are heparin-binding region; it reads RLQRKSLAVDFVVPSLFRVYARD. 11 N-linked (GlcNAc...) asparagine glycosylation sites follow: Asn-174, Asn-248, Asn-289, Asn-328, Asn-415, Asn-428, Asn-449, Asn-567, Asn-575, Asn-631, and Asn-673. The region spanning 268-431 is the MAM 1 domain; the sequence is LECSFDFPCE…DFFALKNCSE (164 aa). The region spanning 441-477 is the LDL-receptor class A domain; that stretch reads LQSSFTCWNGTVLQLGQACDFHQDCAQGEDEGQLCSK. The MAM 2 domain occupies 482 to 640; that stretch reads FYCNFENGFC…NISISLDCYL (159 aa). Cysteines 692 and 705 form a disulfide. Asn-713 carries N-linked (GlcNAc...) asparagine glycosylation. A disulfide bond links Cys-787 and Cys-798. 3 N-linked (GlcNAc...) asparagine glycosylation sites follow: Asn-812, Asn-868, and Asn-890. Cys-910 and Cys-932 form a disulfide bridge. Residue Asn-990 is glycosylated (N-linked (GlcNAc...) asparagine). Disulfide bonds link Cys-991–Cys-999, Cys-994–Cys-1010, and Cys-1012–Cys-1025. Residues 991–1029 form an EGF-like region; it reads CSHCEVDECHMDPESHKVICFCDHGTVLADDGVSCIVSP. The helical transmembrane segment at 1043-1063 threads the bilayer; that stretch reads VVTSALVAALVLAFSGIMIVY. The Cytoplasmic portion of the chain corresponds to 1064 to 1621; that stretch reads RRKHQELQAM…SKNKVTQPGP (558 aa). Residues Tyr-1082, Tyr-1096, and Tyr-1100 each carry the phosphotyrosine modification. Residues 1120-1396 enclose the Protein kinase domain; that stretch reads ITLIRGLGHG…IEYCTQDPDV (277 aa). ATP contacts are provided by residues 1126 to 1134 and His-1128; that span reads LGHGAFGEV. Tyr-1135 carries the phosphotyrosine modification. Residues Lys-1154 and 1201–1203 contribute to the ATP site; that span reads ELM. The active-site Proton acceptor is Asp-1253. Asp-1274 contacts ATP. Phosphotyrosine is present on Tyr-1282. The tract at residues 1412 to 1556 is disordered; sequence EEKVPMRPKD…WTGPGAGPRR (145 aa). Positions 1414 to 1423 are enriched in basic and acidic residues; sequence KVPMRPKDPE. Residues 1441 to 1461 show a composition bias toward low complexity; it reads SAAPQPAALTAPGPSVKKPPG. Residues 1462 to 1472 are compositionally biased toward gly residues; sequence AGAGAGAGAGA. A compositionally biased stretch (polar residues) spans 1506–1518; it reads NKPTSLWNPTYGS. The residue at position 1516 (Tyr-1516) is a Phosphotyrosine. Gly residues predominate over residues 1543 to 1552; it reads AEGGWTGPGA.

The protein belongs to the protein kinase superfamily. Tyr protein kinase family. Insulin receptor subfamily. As to quaternary structure, homodimer; homodimerizes following heparin- and ligand-binding. Interacts with CBL, IRS1, PIK3R1 and PLCG1. Interacts with FRS2 and SHC1. Interacts with PTN and MDK. Phosphorylated at tyrosine residues by autocatalysis, which activates kinase activity. In cells not stimulated by a ligand, receptor protein tyrosine phosphatase beta and zeta complex (PTPRB/PTPRZ1) dephosphorylates ALK at the sites in ALK that are undergoing autophosphorylation through autoactivation. As to expression, mainly expressed in central nervous system (CNS) and other parts of the brain such as the paraventricular nucleus (PVN) of the hypothalamus. Expression is also found in peripheral nervous systems, eye, nasal epithelium, olfactory nerve, tongue, skin, tissue surrounding the esophagus, stomach, midgut, as well as testis and ovary.

It is found in the cell membrane. It carries out the reaction L-tyrosyl-[protein] + ATP = O-phospho-L-tyrosyl-[protein] + ADP + H(+). Activated upon ALKAL2 ligand-binding. ALKAL2-driven activation is coupled with heparin-binding. Following ligand-binding, homodimerizes and autophosphorylates, activating its kinase activity. Inactivated through dephosphorylation by receptor protein tyrosine phosphatase beta and zeta complex (PTPRB/PTPRZ1) when there is no stimulation by a ligand. In terms of biological role, neuronal receptor tyrosine kinase that is essentially and transiently expressed in specific regions of the central and peripheral nervous systems and plays an important role in the genesis and differentiation of the nervous system. Also acts as a key thinness protein involved in the resistance to weight gain: in hypothalamic neurons, controls energy expenditure acting as a negative regulator of white adipose tissue lipolysis and sympathetic tone to fine-tune energy homeostasis. Following activation by ALKAL2 ligand at the cell surface, transduces an extracellular signal into an intracellular response. In contrast, ALKAL1 is not a potent physiological ligand for ALK. Ligand-binding to the extracellular domain induces tyrosine kinase activation, leading to activation of the mitogen-activated protein kinase (MAPK) pathway. Phosphorylates almost exclusively at the first tyrosine of the Y-x-x-x-Y-Y motif. Induces tyrosine phosphorylation of CBL, FRS2, IRS1 and SHC1, as well as of the MAP kinases MAPK1/ERK2 and MAPK3/ERK1. ALK activation may also be regulated by pleiotrophin (PTN) and midkine (MDK). PTN-binding induces MAPK pathway activation, which is important for the anti-apoptotic signaling of PTN and regulation of cell proliferation. MDK-binding induces phosphorylation of the ALK target insulin receptor substrate (IRS1), activates mitogen-activated protein kinases (MAPKs) and PI3-kinase, resulting also in cell proliferation induction. Drives NF-kappa-B activation, probably through IRS1 and the activation of the AKT serine/threonine kinase. Recruitment of IRS1 to activated ALK and the activation of NF-kappa-B are essential for the autocrine growth and survival signaling of MDK. The protein is ALK tyrosine kinase receptor of Mus musculus (Mouse).